Here is a 195-residue protein sequence, read N- to C-terminus: BAG family molecular chaperone regulator 1A (195 aa).

Residues 6 to 72 (STVTIHYGNQ…KLGLKNHSKI (67 aa)) enclose the Ubiquitin-like domain. A disordered region spans residues 78–98 (HKQQRGSKEKDTVEPAPKAEA). Residues 83–98 (GSKEKDTVEPAPKAEA) show a composition bias toward basic and acidic residues. The BAG domain maps to 109-190 (EIKAIDQYVD…KMLDHVDQTS (82 aa)).

In terms of assembly, binds to the ATPase domain of HSP70/HSC chaperones.

Inhibits the chaperone activity of HSP70/HSC70 by promoting substrate release. The protein is BAG family molecular chaperone regulator 1A (bag101) of Schizosaccharomyces pombe (strain 972 / ATCC 24843) (Fission yeast).